Here is a 33-residue protein sequence, read N- to C-terminus: Brevinin-2E (33 aa).

The cysteines at positions 27 and 33 are disulfide-linked.

It belongs to the frog skin active peptide (FSAP) family. Brevinin subfamily. Expressed by the skin glands.

The protein resides in the secreted. Shows antibacterial activity against representative Gram-negative and Gram-positive bacterial species, and hemolytic activity. This is Brevinin-2E from Pelophylax lessonae (Pool frog).